A 1226-amino-acid polypeptide reads, in one-letter code: Probable phosphorylase b kinase regulatory subunit alpha (1226 aa).

The interval 666–688 (NEKITTPRGPRTLRRGESVKDRS) is disordered. The segment covering 679 to 688 (RRGESVKDRS) has biased composition (basic and acidic residues).

It belongs to the phosphorylase b kinase regulatory chain family.

The protein operates within glycan biosynthesis; glycogen metabolism. Its function is as follows. Phosphorylase b kinase catalyzes the phosphorylation of serine in certain substrates, including troponin I. The alpha chain may bind calmodulin. The polypeptide is Probable phosphorylase b kinase regulatory subunit alpha (Caenorhabditis elegans).